Consider the following 277-residue polypeptide: Large ribosomal subunit protein uL2 (277 aa).

Residues 219–277 are disordered; that stretch reads TVRGSVMNPNDHPHGGGEGKAPVGRKAPSTPWGKPALGLKTRNKKAKSDKLIVRRRNEK. Positions 264 to 277 are enriched in basic and acidic residues; the sequence is AKSDKLIVRRRNEK.

This sequence belongs to the universal ribosomal protein uL2 family. In terms of assembly, part of the 50S ribosomal subunit. Forms a bridge to the 30S subunit in the 70S ribosome.

Functionally, one of the primary rRNA binding proteins. Required for association of the 30S and 50S subunits to form the 70S ribosome, for tRNA binding and peptide bond formation. It has been suggested to have peptidyltransferase activity; this is somewhat controversial. Makes several contacts with the 16S rRNA in the 70S ribosome. This chain is Large ribosomal subunit protein uL2, found in Streptococcus gordonii (strain Challis / ATCC 35105 / BCRC 15272 / CH1 / DL1 / V288).